Reading from the N-terminus, the 421-residue chain is Gamma-glutamyl phosphate reductase (421 aa).

Belongs to the gamma-glutamyl phosphate reductase family.

It localises to the cytoplasm. The catalysed reaction is L-glutamate 5-semialdehyde + phosphate + NADP(+) = L-glutamyl 5-phosphate + NADPH + H(+). Its pathway is amino-acid biosynthesis; L-proline biosynthesis; L-glutamate 5-semialdehyde from L-glutamate: step 2/2. Functionally, catalyzes the NADPH-dependent reduction of L-glutamate 5-phosphate into L-glutamate 5-semialdehyde and phosphate. The product spontaneously undergoes cyclization to form 1-pyrroline-5-carboxylate. The protein is Gamma-glutamyl phosphate reductase of Herminiimonas arsenicoxydans.